The primary structure comprises 298 residues: MHFIMMKLFRVVKRGYYISYAILDNSTIIRLDEDPIKALMRYSENKEVLGDRVTGIDYQSLLKSFQINDIRITKPIDPPEVWGSGISYEMARERYSEENVAKILGKTIYEKVYDAVRPEIFFKATPNRCVGHGEAIAVRSDSEWTLPEPELAVVLDSNGKILGYTIMDDVSARDLEAENPLYLPQSKIYAGCCAFGPVIVTSDEIKNPYSLDITLKIVREGRVFFEGSVNTNKMRRKIEEQIQYLIRDNPIPDGTILTTGTAIVPGRDKGLKDEDIVEITISNIGTLITPVKKRRKIT.

I86 contributes to the substrate binding site. Residues E148, E150, and D169 each contribute to the Mg(2+) site. 2 residues coordinate substrate: K187 and T261.

It belongs to the FAH family. In terms of assembly, homotetramer. Requires Mg(2+) as cofactor. It depends on Ca(2+) as a cofactor.

It catalyses the reaction 2-dehydro-3-deoxy-D-arabinonate = 2,5-dioxopentanoate + H2O. Its function is as follows. Participates in a pentose oxidation pathway that converts D-arabinonate to 2-oxoglutarate. The polypeptide is 2-dehydro-3-deoxy-D-arabinonate dehydratase (Saccharolobus solfataricus (strain ATCC 35092 / DSM 1617 / JCM 11322 / P2) (Sulfolobus solfataricus)).